Reading from the N-terminus, the 151-residue chain is 3-dehydroquinate dehydratase (151 aa).

Tyr-24 serves as the catalytic Proton acceptor. Substrate-binding residues include Asn-76, His-82, and Asp-89. Residue His-102 is the Proton donor of the active site. Residues 103–104 and Arg-113 contribute to the substrate site; that span reads VS.

It belongs to the type-II 3-dehydroquinase family. In terms of assembly, homododecamer.

It carries out the reaction 3-dehydroquinate = 3-dehydroshikimate + H2O. The protein operates within metabolic intermediate biosynthesis; chorismate biosynthesis; chorismate from D-erythrose 4-phosphate and phosphoenolpyruvate: step 3/7. Catalyzes a trans-dehydration via an enolate intermediate. This is 3-dehydroquinate dehydratase from Rhodopseudomonas palustris (strain BisA53).